Reading from the N-terminus, the 321-residue chain is Glycerol-3-phosphate dehydrogenase [NAD(P)+] (321 aa).

The NADPH site is built by serine 10, tryptophan 11, arginine 31, arginine 32, tyrosine 47, and lysine 98. Residues lysine 98, glycine 125, and serine 127 each coordinate sn-glycerol 3-phosphate. NADPH is bound at residue alanine 129. Positions 177, 230, 240, 241, and 242 each coordinate sn-glycerol 3-phosphate. The active-site Proton acceptor is lysine 177. An NADPH-binding site is contributed by arginine 241. Residues valine 265 and glutamate 267 each contribute to the NADPH site.

This sequence belongs to the NAD-dependent glycerol-3-phosphate dehydrogenase family.

The protein localises to the cytoplasm. It carries out the reaction sn-glycerol 3-phosphate + NAD(+) = dihydroxyacetone phosphate + NADH + H(+). The catalysed reaction is sn-glycerol 3-phosphate + NADP(+) = dihydroxyacetone phosphate + NADPH + H(+). It participates in membrane lipid metabolism; glycerophospholipid metabolism. In terms of biological role, catalyzes the reduction of the glycolytic intermediate dihydroxyacetone phosphate (DHAP) to sn-glycerol 3-phosphate (G3P), the key precursor for phospholipid synthesis. In Thermotoga sp. (strain RQ2), this protein is Glycerol-3-phosphate dehydrogenase [NAD(P)+].